The sequence spans 344 residues: Phenylalanine--tRNA ligase alpha subunit (344 aa).

Glu256 is a Mg(2+) binding site.

The protein belongs to the class-II aminoacyl-tRNA synthetase family. Phe-tRNA synthetase alpha subunit type 1 subfamily. Tetramer of two alpha and two beta subunits. Requires Mg(2+) as cofactor.

The protein resides in the cytoplasm. The enzyme catalyses tRNA(Phe) + L-phenylalanine + ATP = L-phenylalanyl-tRNA(Phe) + AMP + diphosphate + H(+). The chain is Phenylalanine--tRNA ligase alpha subunit (pheS) from Halalkalibacterium halodurans (strain ATCC BAA-125 / DSM 18197 / FERM 7344 / JCM 9153 / C-125) (Bacillus halodurans).